The following is a 188-amino-acid chain: Protein TIFY 9 (188 aa).

Residues 20–41 (DADDRHAKSGGSSASSSSSIRG) form a disordered region. Over residues 28 to 38 (SGGSSASSSSS) the composition is skewed to low complexity. Positions 80–114 (AAAAAAPMTLFYNGSVAVFDVSHDKAEAIMRMATE) constitute a Tify domain. The Jas signature appears at 135-160 (PLTRTKSLQRFLSKRKERLTSLGPYQ). The tract at residues 156-188 (LGPYQVGGPAAVGATTSTTTKSFLAKEEEHTAS) is disordered. The span at 179-188 (LAKEEEHTAS) shows a compositional bias: basic and acidic residues.

The protein belongs to the TIFY/JAZ family. Ubiquitinated. Targeted for degradation by the SCF(COI1) E3 ubiquitin ligase-proteasome pathway during jasmonate signaling.

Its function is as follows. Repressor of jasmonate responses. The sequence is that of Protein TIFY 9 from Oryza sativa subsp. indica (Rice).